Here is a 199-residue protein sequence, read N- to C-terminus: Recombination protein RecR (199 aa).

Residues Cys57–Cys72 form a C4-type zinc finger. Residues Asp81–Pro176 form the Toprim domain.

It belongs to the RecR family.

May play a role in DNA repair. It seems to be involved in an RecBC-independent recombinational process of DNA repair. It may act with RecF and RecO. This chain is Recombination protein RecR, found in Shewanella amazonensis (strain ATCC BAA-1098 / SB2B).